A 1336-amino-acid polypeptide reads, in one-letter code: Immunoglobulin superfamily member 1 (1336 aa).

The first 28 residues, 1 to 28 (MTLDRPGEGATMLKTFTVLLFCIRMSLG), serve as a signal peptide directing secretion. At 29 to 518 (MTSIVMDPQP…GYLTWNYVLN (490 aa)) the chain is on the extracellular side. Ig-like C2-type domains follow at residues 38–122 (PELW…KVLE), 137–222 (QAET…LVVA), 226–312 (PKPT…SDVL), 321–408 (PKTW…PSHN), and 419–500 (PKPS…HRSE). N-linked (GlcNAc...) asparagine glycosylation is present at Asn-53. A disulfide bridge connects residues Cys-58 and Cys-106. Cys-248 and Cys-296 are oxidised to a cystine. N-linked (GlcNAc...) asparagine glycans are attached at residues Asn-338, Asn-374, and Asn-381. 2 disulfide bridges follow: Cys-343–Cys-392 and Cys-441–Cys-484. Residues 519-539 (EAIRLSLIMQLVALLLVVLWI) traverse the membrane as a helical segment. Residues 540 to 559 (RWKCRRLRIREAWLLGTAQG) are Cytoplasmic-facing. A helical membrane pass occupies residues 560-580 (VTMLFIVTALLCCGLCNGVLI). The Extracellular segment spans residues 581–1336 (EETEIVMPTP…RISVELPVPI (756 aa)). 7 Ig-like C2-type domains span residues 589–677 (TPKP…ALEL), 686–760 (PVIS…RPFK), 777–869 (PKPF…LVVT), 873–958 (PKPT…YLSM), 965–1060 (TDTF…ELLV), 1065–1150 (PKPS…NHSD), and 1161–1242 (PKPS…EPSD). 8 N-linked (GlcNAc...) asparagine glycosylation sites follow: Asn-607, Asn-747, Asn-798, Asn-846, Asn-939, Asn-986, Asn-1027, and Asn-1082. A disulfide bond links Cys-703 and Cys-750. 2 disulfide bridges follow: Cys-799–Cys-849 and Cys-895–Cys-942. Cys-1087 and Cys-1134 form a disulfide bridge. N-linked (GlcNAc...) asparagine glycosylation is found at Asn-1147 and Asn-1223. A disulfide bond links Cys-1183 and Cys-1226. Positions 1308–1336 (CNQEGEPGTPANSPSSTSQRISVELPVPI) are disordered. Residues 1317 to 1328 (PANSPSSTSQRI) are compositionally biased toward polar residues.

Interacts with INHA. In PubMed:12385827 does not interact with INHA; standard receptor binding assay. Interacts with ACVR1B; the interaction appears to be ligand-dependent as it is diminished by inhibin B and activin A. Interacts with ACVR2A, ACVR2B, ACVRL1 and BMPR1B. Interacts with HECTD1. In terms of tissue distribution, highly expressed in pancreas, testis and fetal liver. Moderately expressed in heart, prostate and small intestine. Expressed at very low levels in brain, thymus, ovary, colon, fetal lung and fetal kidney. Expressed in muscle. Isoform 3 is expressed in pituitary gland.

It is found in the membrane. The protein localises to the secreted. Its function is as follows. Seems to be a coreceptor in inhibin signaling, but seems not to be a high-affinity inhibin receptor. Antagonizes activin A signaling in the presence or absence of inhibin B. Necessary to mediate a specific antagonistic effect of inhibin B on activin-stimulated transcription. In Homo sapiens (Human), this protein is Immunoglobulin superfamily member 1 (IGSF1).